Consider the following 491-residue polypeptide: CRM-domain containing factor CFM9, mitochondrial (491 aa).

The N-terminal 25 residues, 1-25, are a transit peptide targeting the mitochondrion; that stretch reads MNQVFKGWSRGMSTSRGRSMRSKVE. Residues 1–34 form a disordered region; sequence MNQVFKGWSRGMSTSRGRSMRSKVESRMRKESGK. The span at 22–34 shows a compositional bias: basic and acidic residues; sequence SKVESRMRKESGK. Residues 90–187 enclose the CRM domain; the sequence is ELFTSEQVQA…RNYRQPKNLI (98 aa). The segment covering 255–265 has biased composition (basic and acidic residues); it reads PYVFHGDKQSE. Disordered stretches follow at residues 255–287 and 328–491; these read PYVF…DQEE and RSRT…WDSD. Over residues 277-287 the composition is skewed to acidic residues; the sequence is EPGDEDSDQEE. The span at 345–359 shows a compositional bias: basic and acidic residues; the sequence is RRNDRDTHSQRRPND. Residues 360–375 show a composition bias toward acidic residues; that stretch reads SDDDDDDGELDSEDDE. A compositionally biased stretch (basic and acidic residues) spans 392–416; the sequence is RPREDFKRRSPDPRPRPRAQVRSDD. Positions 453 to 478 are enriched in polar residues; that stretch reads TVSASSSKQSRFRNNSSRDGINNSKS.

In terms of tissue distribution, highly expressed in roots and meristemic regions of young seedlings. Expressed at low levels in stems, trichomes and stigma.

Its subcellular location is the mitochondrion. Functionally, involved in the splicing of group II introns in mitochondria. Required for the splicing of mitochondrial introns found in nad1, nad2, nad4, nad5, nad7, rps3 and cox2 genes. Splicing of mitochondrial introns is crucial for mitochondrial biogenesis and function, plant growth and development, and plant response to abiotic stresses. This is CRM-domain containing factor CFM9, mitochondrial from Arabidopsis thaliana (Mouse-ear cress).